The chain runs to 293 residues: MKDKIVRATAKDGMVRIIAGITTNLVNEGCKIHECTPVASAALGRMLTAGTLIGTTLKSEKEVVTLKINGNGEINGITVTAHSDASVKGFIGNPYVDRPLNEKGKLDVGGAIGTDGILYVIKDLGLRDPYIGQVPIQTGEIAEDFAYYFTASEQTPSAVSLGVLVDRDLSIKAAGGFIVQMMPGADELLADVITYRLEEIPPITTLISEGKTIEEILEYIFDGMDLKVLDSLTPEYKCDCSRERVEKALISIGKETLQEIYDDKKNEEIVCNFCNTKYEFTNDEIGELLNNSR.

Intrachain disulfides connect Cys238–Cys240 and Cys271–Cys274.

This sequence belongs to the HSP33 family. Under oxidizing conditions two disulfide bonds are formed involving the reactive cysteines. Under reducing conditions zinc is bound to the reactive cysteines and the protein is inactive.

Its subcellular location is the cytoplasm. Its function is as follows. Redox regulated molecular chaperone. Protects both thermally unfolding and oxidatively damaged proteins from irreversible aggregation. Plays an important role in the bacterial defense system toward oxidative stress. The polypeptide is 33 kDa chaperonin (Clostridium beijerinckii (strain ATCC 51743 / NCIMB 8052) (Clostridium acetobutylicum)).